We begin with the raw amino-acid sequence, 147 residues long: MAVQFILCFNKQGVVRLVRWFDVHSSDPQRSQDAIAQIYRLISSRDHKHQSNFVEFSDSTKLIYRRYAGLYFVMGVDLLDDEPIYLCHIHLFVEVLDAFFGNVCELDIVFNFYKVYMIMDEMFIGGEIQEISKDMLLERLSILDRLD.

It belongs to the adaptor complexes small subunit family. Adaptor protein complex 2 (AP-2) is a heterotetramer composed of two large adaptins (alpha-type subunit APL3 and beta-type subunit APL1), a medium chain (mu-type subunit APM4) and a small adaptin (sigma-type subunit APS2). Interacts with APL1.

The protein localises to the cell membrane. Its subcellular location is the membrane. It localises to the coated pit. Component of the adaptor complexes which link clathrin to receptors in coated vesicles. Clathrin-associated protein complexes are believed to interact with the cytoplasmic tails of membrane proteins, leading to their selection and concentration. This chain is AP-2 complex subunit sigma (APS2), found in Saccharomyces cerevisiae (strain ATCC 204508 / S288c) (Baker's yeast).